The following is a 676-amino-acid chain: RNA helicase NPH-II (676 aa).

A Helicase ATP-binding domain is found at 172 to 347; it reads FSAWISHRPV…VFLPNPAFIH (176 aa). Residue 185 to 192 participates in ATP binding; the sequence is GGTGVGKT. A DEXH box motif is present at residues 296-299; that stretch reads DEVH. In terms of domain architecture, Helicase C-terminal spans 366–535; it reads NPSSRMAYIE…NYILYANKFN (170 aa).

This sequence belongs to the DEAD box helicase family. DEAH subfamily. Monomer.

It localises to the virion. It catalyses the reaction ATP + H2O = ADP + phosphate + H(+). Functionally, NTP-dependent helicase that catalyzes unidirectional unwinding of 3'tailed duplex RNAs and plays an important role during transcription of early mRNAs, presumably by preventing R-loop formation behind the elongating RNA polymerase. Might also play a role in the export of newly synthesized mRNA chains out of the core into the cytoplasm. Required for replication and propagation of viral particles. The chain is RNA helicase NPH-II (OPG084) from Bos taurus (Bovine).